The chain runs to 544 residues: Phosphoenolpyruvate carboxykinase (ATP) (544 aa).

246 to 253 lines the ATP pocket; the sequence is GLSGTGKT.

It belongs to the phosphoenolpyruvate carboxykinase (ATP) family.

The catalysed reaction is oxaloacetate + ATP = phosphoenolpyruvate + ADP + CO2. Its pathway is carbohydrate biosynthesis; gluconeogenesis. The polypeptide is Phosphoenolpyruvate carboxykinase (ATP) (PCK1) (Candida glabrata (strain ATCC 2001 / BCRC 20586 / JCM 3761 / NBRC 0622 / NRRL Y-65 / CBS 138) (Yeast)).